The sequence spans 183 residues: Photosystem I assembly protein Ycf4 (183 aa).

Helical transmembrane passes span 21–43 and 63–85; these read YIWG…SSYL and LVMC…LILW.

It belongs to the Ycf4 family.

It is found in the plastid. The protein resides in the chloroplast thylakoid membrane. In terms of biological role, seems to be required for the assembly of the photosystem I complex. The protein is Photosystem I assembly protein Ycf4 of Chlorella vulgaris (Green alga).